A 78-amino-acid polypeptide reads, in one-letter code: Hainantoxin-XX.2 (78 aa).

Residues 1–23 form the signal peptide; the sequence is MKSATLLALSYLLIALYFLICEA. A propeptide spanning residues 24 to 47 is cleaved from the precursor; it reads EHSRYEEHEILEENMGDVVNLEQR. 3 cysteine pairs are disulfide-bonded: C49–C62, C56–C66, and C61–C77.

Belongs to the hainantoxin family. 20 subfamily. As to expression, expressed by the venom gland.

The protein resides in the secreted. Moderately inhibits Kv1.1/KCNA1 and Kv1.2/KCNA2 and weakly inhibits Kv1.3/KCNA3, and Kv2.1/KCNB1 voltage-gated potassium channels. This Cyriopagopus hainanus (Chinese bird spider) protein is Hainantoxin-XX.2.